Consider the following 480-residue polypeptide: Mannose-1-phosphate guanylyltransferase ManC (480 aa).

Belongs to the mannose-6-phosphate isomerase type 2 family.

It catalyses the reaction alpha-D-mannose 1-phosphate + GTP + H(+) = GDP-alpha-D-mannose + diphosphate. Its pathway is nucleotide-sugar biosynthesis; GDP-alpha-D-mannose biosynthesis; GDP-alpha-D-mannose from alpha-D-mannose 1-phosphate (GTP route): step 1/1. Functionally, involved in the biosynthesis of the capsular polysaccharide colanic acid. The sequence is that of Mannose-1-phosphate guanylyltransferase ManC (manC) from Salmonella typhimurium (strain LT2 / SGSC1412 / ATCC 700720).